A 589-amino-acid polypeptide reads, in one-letter code: Heterogeneous nuclear ribonucleoprotein L (589 aa).

Positions 1 to 16 (MSRRLLPRAEKRRRRL) are enriched in basic residues. A disordered region spans residues 1 to 100 (MSRRLLPRAE…NYDDPHKTPA (100 aa)). Basic and acidic residues predominate over residues 17-27 (EQRQQPDEQRR). Gly residues predominate over residues 38–54 (AGGGGGGGRYYGGGSEG). A Phosphoserine modification is found at Ser52. Glycyl lysine isopeptide (Lys-Gly) (interchain with G-Cter in SUMO2) cross-links involve residues Lys59 and Lys62. Residues 69-90 (QHGGGGGGGGGAGAAGGGGGGE) show a composition bias toward gly residues. Phosphoserine is present on Ser101. In terms of domain architecture, RRM 1 spans 102–176 (PVVHIRGLID…HPAFVNYSTS (75 aa)). Residue Lys136 forms a Glycyl lysine isopeptide (Lys-Gly) (interchain with G-Cter in SUMO2) linkage. Residue Ser185 is modified to Phosphoserine. One can recognise an RRM 2 domain in the interval 193–270 (SVLLFTILNP…CTLKIEYAKP (78 aa)). Lys269 carries the N6-acetyllysine modification. The segment covering 284–301 (DYTNPNLSGQGDPGSNPN) has biased composition (polar residues). The tract at residues 284 to 378 (DYTNPNLSGQ…PPPPPEYGPH (95 aa)) is disordered. A phosphoserine mark is found at Ser291 and Ser298. Lys302 participates in a covalent cross-link: Glycyl lysine isopeptide (Lys-Gly) (interchain with G-Cter in SUMO2). Asymmetric dimethylarginine is present on residues Arg354 and Arg358. Over residues 364 to 375 (GHPPPPPPPPEY) the composition is skewed to pro residues. The residue at position 381 (Ser381) is a Phosphoserine. 2 RRM domains span residues 382-478 (PVLM…KDFS) and 495-583 (RIQH…LCFS). Ser544 carries the phosphoserine; by CaMK4 modification. A Glycyl lysine isopeptide (Lys-Gly) (interchain with G-Cter in SUMO2) cross-link involves residue Lys568.

As to quaternary structure, identified in a IGF2BP1-dependent mRNP granule complex containing untranslated mRNAs. Interacts with HNRNPLL. Interacts with APEX1; the interaction is DNA-dependent. Component of a complex with SETD2. Interacts with ELAVL1. Part of a transcription inhibitory ribonucleoprotein complex composed at least of the circular RNA circZNF827, ZNF827 and HNRNPK. Interacts with CHD8 in an RNA-dependent manner. In terms of processing, several isoelectric forms of the L protein are probably the results of post-translational modifications. Post-translationally, phosphorylation at Ser-544 by CaMK4 enhances interaction with a CaMK4-responsive RNA element (CaRRE1), and prevents inclusion of the stress axis-regulated exon (STREX) of the KCNMA1 potassium channel transcripts upon membrane depolarization.

It localises to the nucleus. Its subcellular location is the nucleoplasm. The protein resides in the cytoplasm. In terms of biological role, splicing factor binding to exonic or intronic sites and acting as either an activator or repressor of exon inclusion. Exhibits a binding preference for CA-rich elements. Component of the heterogeneous nuclear ribonucleoprotein (hnRNP) complexes and associated with most nascent transcripts. Associates, together with APEX1, to the negative calcium responsive element (nCaRE) B2 of the APEX2 promoter. As part of a ribonucleoprotein complex composed at least of ZNF827, HNRNPK and the circular RNA circZNF827 that nucleates the complex on chromatin, may negatively regulate the transcription of genes involved in neuronal differentiation. Regulates alternative splicing of a core group of genes involved in neuronal differentiation, likely by mediating H3K36me3-coupled transcription elongation and co-transcriptional RNA processing via interaction with CHD8. This is Heterogeneous nuclear ribonucleoprotein L (HNRNPL) from Homo sapiens (Human).